Reading from the N-terminus, the 312-residue chain is Ribosomal protein uL3 glutamine methyltransferase (312 aa).

Belongs to the protein N5-glutamine methyltransferase family. PrmB subfamily.

The catalysed reaction is L-glutaminyl-[ribosomal protein uL3] + S-adenosyl-L-methionine = N(5)-methyl-L-glutaminyl-[ribosomal protein uL3] + S-adenosyl-L-homocysteine + H(+). In terms of biological role, methylates large ribosomal subunit protein uL3 on a specific glutamine residue. In Xylella fastidiosa (strain 9a5c), this protein is Ribosomal protein uL3 glutamine methyltransferase.